A 157-amino-acid polypeptide reads, in one-letter code: 2-amino-4-hydroxy-6-hydroxymethyldihydropteridine pyrophosphokinase (157 aa).

This sequence belongs to the HPPK family.

It carries out the reaction 6-hydroxymethyl-7,8-dihydropterin + ATP = (7,8-dihydropterin-6-yl)methyl diphosphate + AMP + H(+). It functions in the pathway cofactor biosynthesis; tetrahydrofolate biosynthesis; 2-amino-4-hydroxy-6-hydroxymethyl-7,8-dihydropteridine diphosphate from 7,8-dihydroneopterin triphosphate: step 4/4. Catalyzes the transfer of pyrophosphate from adenosine triphosphate (ATP) to 6-hydroxymethyl-7,8-dihydropterin, an enzymatic step in folate biosynthesis pathway. The chain is 2-amino-4-hydroxy-6-hydroxymethyldihydropteridine pyrophosphokinase (folK) from Campylobacter jejuni subsp. jejuni serotype O:2 (strain ATCC 700819 / NCTC 11168).